The sequence spans 318 residues: Pyrimidine-specific ribonucleoside hydrolase RihA (318 aa).

Residue histidine 240 is part of the active site.

It belongs to the IUNH family. RihA subfamily.

Its function is as follows. Hydrolyzes cytidine or uridine to ribose and cytosine or uracil, respectively. The chain is Pyrimidine-specific ribonucleoside hydrolase RihA from Shewanella sp. (strain ANA-3).